Reading from the N-terminus, the 309-residue chain is Succinoglycan biosynthesis protein ExoM (309 aa).

This sequence belongs to the glycosyltransferase 2 family.

Its subcellular location is the cell inner membrane. Its pathway is glycan metabolism; exopolysaccharide biosynthesis. In terms of biological role, glycosyltransferase required for the synthesis of succinoglycan (EPS I). Needed for the addition of the fourth sugar (glucose), catalyzes the formation of a beta-1,4 linkage between the third acetylated sugar and the fourth sugar. The chain is Succinoglycan biosynthesis protein ExoM (exoM) from Rhizobium meliloti (strain 1021) (Ensifer meliloti).